Here is an 840-residue protein sequence, read N- to C-terminus: Protein translocase subunit SecA (840 aa).

ATP-binding positions include Gln-85, 103–107, and Asp-492; that span reads GEGKT. The tract at residues 787 to 821 is disordered; the sequence is QRERVAKETGASHGGDSQEIKKKPVKKEPKVGRND. Residues 802–819 show a composition bias toward basic and acidic residues; sequence DSQEIKKKPVKKEPKVGR. Zn(2+) contacts are provided by Cys-823, Cys-825, Cys-834, and Cys-835.

This sequence belongs to the SecA family. In terms of assembly, monomer and homodimer. Part of the essential Sec protein translocation apparatus which comprises SecA, SecYEG and auxiliary proteins SecDF. Other proteins may also be involved. Zn(2+) serves as cofactor.

Its subcellular location is the cell membrane. The protein localises to the cytoplasm. The catalysed reaction is ATP + H2O + cellular proteinSide 1 = ADP + phosphate + cellular proteinSide 2.. Part of the Sec protein translocase complex. Interacts with the SecYEG preprotein conducting channel. Has a central role in coupling the hydrolysis of ATP to the transfer of proteins into and across the cell membrane, serving as an ATP-driven molecular motor driving the stepwise translocation of polypeptide chains across the membrane. In Clostridium perfringens (strain SM101 / Type A), this protein is Protein translocase subunit SecA.